The chain runs to 368 residues: MKLTVKTLKGSHFEIRVLPTDTIMAVKKNIEDSQSKDNYPCGQQLLIHNGKVLKDETTLVENKVTEEGFLVVMLSKSKTASSAGPSSTQPTSTTTSTISSTTLAAPSTTQSIAVPASNSTPVQEQPTAQSDTYGQAASTLVSGSSIEQMVQQIMEMGGGSWDKETVTRALRAAYNNPERAVDYLYSGIPETVTIPATNLSGVGSGRELTAPPPSGGPNSSPLDLFPQEAVSDAAGGDLGTLEFLRGNDQFQQLRSMVNSNPQILQPMLQELGKQNPQLLRLIQENQAEFLQLLNEPYEGSDGDVDIFDQPDQEMPHSVNVTPEEQESIERLEAMGFDRAIVIEAFLSCDRNEELAANYLLEHSADFED.

Residues 1 to 77 (MKLTVKTLKG…GFLVVMLSKS (77 aa)) enclose the Ubiquitin-like domain. Residues 80–111 (ASSAGPSSTQPTSTTTSTISSTTLAAPSTTQS) are compositionally biased toward low complexity. The segment at 80 to 136 (ASSAGPSSTQPTSTTTSTISSTTLAAPSTTQSIAVPASNSTPVQEQPTAQSDTYGQA) is disordered. The span at 116–136 (ASNSTPVQEQPTAQSDTYGQA) shows a compositional bias: polar residues. Residues 142–185 (SGSSIEQMVQQIMEMGGGSWDKETVTRALRAAYNNPERAVDYLY) enclose the UBA 1 domain. Residues 202–222 (VGSGRELTAPPPSGGPNSSPL) are disordered. One can recognise an STI1 domain in the interval 239-282 (GTLEFLRGNDQFQQLRSMVNSNPQILQPMLQELGKQNPQLLRLI). Positions 320 to 360 (VTPEEQESIERLEAMGFDRAIVIEAFLSCDRNEELAANYLL) constitute a UBA 2 domain.

The protein belongs to the RAD23 family. In terms of assembly, interacts with 'Lys-48'-linked polyubiquitin chains. Interacts with RPN10. As to expression, widely expressed in the whole plant.

It is found in the nucleus. The protein resides in the cytoplasm. Its function is as follows. May be involved in nucleotide excision repair. Binds and presumably selects ubiquitin-conjugates for destruction. Prefers multiubiquitin chains rather than single ubiquitins, with a binding affinity for 'Lys-48'-linked ubiquitin chains. Acts as a ubiquitin receptor that associates with the 26S proteasomal docking subunit RPN10 for the indirect recognition of ubiquitinated substrates of ubiquitin/26S proteasome-mediated proteolysis (UPP). Involved in UV tolerance in roots, specifically in dark conditions. This Arabidopsis thaliana (Mouse-ear cress) protein is Probable ubiquitin receptor RAD23a.